A 404-amino-acid polypeptide reads, in one-letter code: Tryptophan synthase beta chain (404 aa).

Lys94 is modified (N6-(pyridoxal phosphate)lysine).

This sequence belongs to the TrpB family. In terms of assembly, tetramer of two alpha and two beta chains. It depends on pyridoxal 5'-phosphate as a cofactor.

The catalysed reaction is (1S,2R)-1-C-(indol-3-yl)glycerol 3-phosphate + L-serine = D-glyceraldehyde 3-phosphate + L-tryptophan + H2O. It functions in the pathway amino-acid biosynthesis; L-tryptophan biosynthesis; L-tryptophan from chorismate: step 5/5. Its function is as follows. The beta subunit is responsible for the synthesis of L-tryptophan from indole and L-serine. This chain is Tryptophan synthase beta chain, found in Staphylococcus aureus (strain MRSA252).